The sequence spans 338 residues: Tetraacyldisaccharide 4'-kinase (338 aa).

53-60 contacts ATP; sequence TVGGSGKT.

Belongs to the LpxK family.

It catalyses the reaction a lipid A disaccharide + ATP = a lipid IVA + ADP + H(+). The protein operates within glycolipid biosynthesis; lipid IV(A) biosynthesis; lipid IV(A) from (3R)-3-hydroxytetradecanoyl-[acyl-carrier-protein] and UDP-N-acetyl-alpha-D-glucosamine: step 6/6. In terms of biological role, transfers the gamma-phosphate of ATP to the 4'-position of a tetraacyldisaccharide 1-phosphate intermediate (termed DS-1-P) to form tetraacyldisaccharide 1,4'-bis-phosphate (lipid IVA). In Azorhizobium caulinodans (strain ATCC 43989 / DSM 5975 / JCM 20966 / LMG 6465 / NBRC 14845 / NCIMB 13405 / ORS 571), this protein is Tetraacyldisaccharide 4'-kinase.